Consider the following 422-residue polypeptide: Isocitrate dehydrogenase [NADP] (422 aa).

Residue Thr94 participates in NADP(+) binding. The D-threo-isocitrate site is built by Ser103, Asn105, Arg109, Arg119, and Arg143. Asp310 is a binding site for Mg(2+). Residues His344 to Tyr350, Asn357, Tyr396, and Arg400 contribute to the NADP(+) site.

This sequence belongs to the isocitrate and isopropylmalate dehydrogenases family. Homodimer. The cofactor is Mg(2+). It depends on Mn(2+) as a cofactor.

It catalyses the reaction D-threo-isocitrate + NADP(+) = 2-oxoglutarate + CO2 + NADPH. In terms of biological role, catalyzes the oxidative decarboxylation of isocitrate to 2-oxoglutarate and carbon dioxide with the concomitant reduction of NADP(+). This chain is Isocitrate dehydrogenase [NADP] (icd), found in Staphylococcus aureus (strain MSSA476).